A 261-amino-acid polypeptide reads, in one-letter code: Ribosome biogenesis protein NSA2 (261 aa).

Positions 1 to 40 are enriched in basic and acidic residues; that stretch reads MPQNDYIERHIKQHGKRLDHEERKRKREARESHKISERAQ. Positions 1–43 are disordered; the sequence is MPQNDYIERHIKQHGKRLDHEERKRKREARESHKISERAQKLT. 2 short sequence motifs (nuclear localization signal) span residues 15-22 and 51-58; these read GKRLDHEE and AKKRYAEK. The tract at residues 61 to 87 is disordered; sequence MRKKIKAHEQSKVKGSSKPLDTDGDAL.

It belongs to the eukaryotic ribosomal protein eS8 family. Ribosome biogenesis protein NSA2 subfamily. In terms of assembly, component of the pre-66S ribosomal particle. Interacts with NOP7 and RRP1. Interacts with RSA4 (via WD repeats).

Its subcellular location is the nucleus. It is found in the nucleolus. Involved in the biogenesis of the 60S ribosomal subunit. May play a part in the quality control of pre-60S particles. Under normal, rapid growth conditions, high levels of NSA2 would allow the progression of pre-60S particles through the ITS2 processing. The chain is Ribosome biogenesis protein NSA2 (NSA2) from Saccharomyces cerevisiae (strain YJM789) (Baker's yeast).